A 519-amino-acid chain; its full sequence is uncharacterized protein (519 aa).

Transmembrane regions (helical) follow at residues 52–72 (IYFLILLYLIQGVPMGLVRGS), 86–106 (LATYSLAAYPYSLKVLWSPIV), 119–139 (TWVVPCMLLISSTLLLFSYNV), 156–176 (WSFLLVFVCATQDIAVDGWSL), 199–219 (FFLSFTILLVFTSPEFANTFI), 231–251 (LSGYIKFWAYFTFIASVLVCF), 313–333 (MLSLIILINFPLGLALGVYTG), 343–363 (IWLKGYWGRVVSILLNTILVY), 374–394 (VFFPIFLCYTLNASFSTIQFV), 408–430 (IGGTYMTILNTLSNLGGSWPQYV), and 477–497 (TSIVGIFLAISICVSLITPVV).

It is found in the membrane. This is an uncharacterized protein from Schizosaccharomyces pombe (strain 972 / ATCC 24843) (Fission yeast).